A 466-amino-acid chain; its full sequence is Alpha-1,3-mannosyltransferase CMT1 (466 aa).

The segment at 1–23 is disordered; it reads MFRNTLRTFPRPATPSLPTSSHS. Residues 1-33 are Cytoplasmic-facing; it reads MFRNTLRTFPRPATPSLPTSSHSPIARASLSKS. The helical; Signal-anchor for type II membrane protein transmembrane segment at 34–54 threads the bilayer; the sequence is PLFVLSLVLVCIFFLSFLSHP. At 55 to 466 the chain is on the lumenal side; that stretch reads DPSARKLQWP…ETRWVQPWLE (412 aa).

The cofactor is Mg(2+). It depends on Mn(2+) as a cofactor. Co(2+) serves as cofactor.

The protein resides in the golgi apparatus membrane. It functions in the pathway protein modification; protein glycosylation. Functionally, responsible for addition of mannose residues in an alpha-1,3 linkage to a polymannosly precursor. May be involved in synthesis of capsule glucuronoxylomannan. This Cryptococcus neoformans var. neoformans serotype D (strain JEC21 / ATCC MYA-565) (Filobasidiella neoformans) protein is Alpha-1,3-mannosyltransferase CMT1.